Here is a 231-residue protein sequence, read N- to C-terminus: Large ribosomal subunit protein uL1 (231 aa).

It belongs to the universal ribosomal protein uL1 family. Part of the 50S ribosomal subunit.

Binds directly to 23S rRNA. The L1 stalk is quite mobile in the ribosome, and is involved in E site tRNA release. Its function is as follows. Protein L1 is also a translational repressor protein, it controls the translation of the L11 operon by binding to its mRNA. The protein is Large ribosomal subunit protein uL1 of Neisseria gonorrhoeae (strain ATCC 700825 / FA 1090).